The chain runs to 464 residues: MSQSYSSSQRVSSYRRTFGGGTSPVFPRASFGSRGSGSSVTSRVYQVSRTSAVPTLSTFRTTRVTPLRTYQSAYQGAGELLDFSLADAMNQEFLQTRTNEKVELQELNDRFANYIEKVRFLEQQNALMVAEVNRLRGKEPTRVAEMYEEELRELRRQVDALTGQRARVEVERDNLLDDLQKLKQRLQEEIQLKEEAENNLAAFRADVDAATLARIDLERRIESLQEEIAFLKKVHEEEIRELQAQLQEQHIQVEMDISKPDLTAALRDIRAQYESIAAKNIAEAEEWYKSKVSDLTQAANKNNDALRQAKQEMLEYRHQIQSYTCEIDALKGTNDSLMRQMREMEERFAGEAGGYQDTIARLEEEIRHLKDEMARHLREYQDLLNVKMALDVEIATYRKLLEGEENRISIPMHQTFASALNFRETSPDQRGSEVHTKKTVMIKTIETRDGEVVSEATQQQHEVL.

Serine 2 carries the post-translational modification Blocked amino end (Ser). A head region spans residues 2-100 (SQSYSSSQRV…QEFLQTRTNE (99 aa)). A phosphoserine; by CDK1 mark is found at serine 7 and serine 23. Position 65 is a phosphothreonine; by CDK1 (threonine 65). Residues 100-408 (EKVELQELND…KLLEGEENRI (309 aa)) enclose the IF rod domain. Positions 101–133 (KVELQELNDRFANYIEKVRFLEQQNALMVAEVN) are coil 1A. Positions 134-143 (RLRGKEPTRV) are linker 1. The tract at residues 144-244 (AEMYEEELRE…HEEEIRELQA (101 aa)) is coil 1B. The tract at residues 245 to 260 (QLQEQHIQVEMDISKP) is linker 12. A coil 2A region spans residues 261–279 (DLTAALRDIRAQYESIAAK). The tract at residues 280 to 287 (NIAEAEEW) is linker 2. A coil 2B region spans residues 288–404 (YKSKVSDLTQ…ATYRKLLEGE (117 aa)). Residues 405–464 (ENRISIPMHQTFASALNFRETSPDQRGSEVHTKKTVMIKTIETRDGEVVSEATQQQHEVL) form a tail region.

This sequence belongs to the intermediate filament family. In terms of assembly, homomer.

It is found in the cytoplasm. The protein resides in the myofibril. The protein localises to the sarcomere. Its subcellular location is the z line. It localises to the cell membrane. It is found in the sarcolemma. Functionally, muscle-specific type III intermediate filament essential for proper muscular structure and function. Plays a crucial role in maintaining the structure of sarcomeres, inter-connecting the Z-disks and forming the myofibrils, linking them not only to the sarcolemmal cytoskeleton, but also to the nucleus and mitochondria, thus providing strength for the muscle fiber during activity. In adult striated muscle they form a fibrous network connecting myofibrils to each other and to the plasma membrane from the periphery of the Z-line structures. The polypeptide is Desmin (DES) (Gallus gallus (Chicken)).